The primary structure comprises 821 residues: Lon protease (821 aa).

One can recognise a Lon N-terminal domain in the interval 18–216; it reads LPLMSLREVV…KVYELLQGEI (199 aa). Residue 368–375 coordinates ATP; sequence GPPGVGKT. Positions 606 to 787 constitute a Lon proteolytic domain; it reads TSQVGVCTGL…DEVLPQALMA (182 aa). Catalysis depends on residues Ser-693 and Lys-736.

This sequence belongs to the peptidase S16 family. Homohexamer. Organized in a ring with a central cavity.

Its subcellular location is the cytoplasm. It catalyses the reaction Hydrolysis of proteins in presence of ATP.. ATP-dependent serine protease that mediates the selective degradation of mutant and abnormal proteins as well as certain short-lived regulatory proteins. Required for cellular homeostasis and for survival from DNA damage and developmental changes induced by stress. Degrades polypeptides processively to yield small peptide fragments that are 5 to 10 amino acids long. Binds to DNA in a double-stranded, site-specific manner. This Nitratidesulfovibrio vulgaris (strain ATCC 29579 / DSM 644 / CCUG 34227 / NCIMB 8303 / VKM B-1760 / Hildenborough) (Desulfovibrio vulgaris) protein is Lon protease.